Here is a 319-residue protein sequence, read N- to C-terminus: Ribosomal RNA small subunit methyltransferase H (319 aa).

S-adenosyl-L-methionine is bound by residues 39 to 41, Asp-59, Phe-83, Asp-104, and Gln-111; that span reads GGH.

It belongs to the methyltransferase superfamily. RsmH family.

It localises to the cytoplasm. It catalyses the reaction cytidine(1402) in 16S rRNA + S-adenosyl-L-methionine = N(4)-methylcytidine(1402) in 16S rRNA + S-adenosyl-L-homocysteine + H(+). Functionally, specifically methylates the N4 position of cytidine in position 1402 (C1402) of 16S rRNA. The protein is Ribosomal RNA small subunit methyltransferase H of Ralstonia nicotianae (strain ATCC BAA-1114 / GMI1000) (Ralstonia solanacearum).